Here is a 347-residue protein sequence, read N- to C-terminus: Cytosolic sulfotransferase 14 (347 aa).

Residue 87-92 participates in 3'-phosphoadenylyl sulfate binding; that stretch reads KSGTTW. The Proton acceptor role is filled by H155. Residues R177, S185, Y244, and 310-312 contribute to the 3'-phosphoadenylyl sulfate site; that span reads RKG.

It belongs to the sulfotransferase 1 family.

The protein resides in the cytoplasm. In terms of biological role, sulfotransferase that utilizes 3'-phospho-5'-adenylyl sulfate (PAPS) as sulfonate donor. Not active with 11-hydroxyjasmonate or 12-hydroxyjasmonate. This chain is Cytosolic sulfotransferase 14 (SOT14), found in Arabidopsis thaliana (Mouse-ear cress).